We begin with the raw amino-acid sequence, 427 residues long: GTPase Obg (427 aa).

An Obg domain is found at 1–158; it reads MFVDKVKVYV…RDVILELKVL (158 aa). A disordered region spans residues 118–144; sequence KGGRGGRGNTRFATPANPAPELSENGE. Residues 159 to 329 form the OBG-type G domain; that stretch reads ADAGLVGFPS…LLRAIMDTIE (171 aa). GTP contacts are provided by residues 165–172, 190–194, 212–215, 282–285, and 310–312; these read GFPSVGKS, FTTIT, DLPG, NKMD, and SAL. Mg(2+)-binding residues include Ser172 and Thr192. Positions 349 to 427 constitute an OCT domain; that stretch reads KHDKEQDPFV…LLEFEFEFIE (79 aa).

The protein belongs to the TRAFAC class OBG-HflX-like GTPase superfamily. OBG GTPase family. Monomer. It depends on Mg(2+) as a cofactor.

It localises to the cytoplasm. In terms of biological role, an essential GTPase which binds GTP, GDP and possibly (p)ppGpp with moderate affinity, with high nucleotide exchange rates and a fairly low GTP hydrolysis rate. Plays a role in control of the cell cycle, stress response, ribosome biogenesis and in those bacteria that undergo differentiation, in morphogenesis control. The polypeptide is GTPase Obg (Halalkalibacterium halodurans (strain ATCC BAA-125 / DSM 18197 / FERM 7344 / JCM 9153 / C-125) (Bacillus halodurans)).